A 314-amino-acid polypeptide reads, in one-letter code: tRNA dimethylallyltransferase (314 aa).

11–18 (GPTGSGKT) contacts ATP. 13 to 18 (TGSGKT) serves as a coordination point for substrate. Residues 36–39 (DSMQ) form an interaction with substrate tRNA region.

The protein belongs to the IPP transferase family. In terms of assembly, monomer. The cofactor is Mg(2+).

The enzyme catalyses adenosine(37) in tRNA + dimethylallyl diphosphate = N(6)-dimethylallyladenosine(37) in tRNA + diphosphate. Functionally, catalyzes the transfer of a dimethylallyl group onto the adenine at position 37 in tRNAs that read codons beginning with uridine, leading to the formation of N6-(dimethylallyl)adenosine (i(6)A). This chain is tRNA dimethylallyltransferase, found in Chlamydia muridarum (strain MoPn / Nigg).